The sequence spans 121 residues: Colipase-like protein 1 (121 aa).

The first 23 residues, 1 to 23, serve as a signal peptide directing secretion; sequence MMLPQWLLLLFLLFFFLFLLTRG. Cystine bridges form between Cys39/Cys50, Cys45/Cys61, Cys49/Cys83, Cys71/Cys91, and Cys85/Cys107.

The protein belongs to the colipase family. Exclusively expressed in epididymis, in the corpus region.

It localises to the secreted. The protein is Colipase-like protein 1 (CLPSL1) of Homo sapiens (Human).